Reading from the N-terminus, the 265-residue chain is Thymidine kinase 2, mitochondrial (265 aa).

The N-terminal 33 residues, 1–33 (MLLRPLRGWAALALRCFEPGSPGSPASGPGSRR), are a transit peptide targeting the mitochondrion. Residues 21 to 31 (SPGSPASGPGS) are compositionally biased toward low complexity. The segment at 21 to 45 (SPGSPASGPGSRRVQRGAWPSDKER) is disordered. 57-65 (GNIASGKTT) serves as a coordination point for ATP. Catalysis depends on E133, which acts as the Proton acceptor.

Belongs to the DCK/DGK family. As to quaternary structure, homodimer.

The protein resides in the mitochondrion. It catalyses the reaction thymidine + ATP = dTMP + ADP + H(+). The catalysed reaction is 2'-deoxycytidine + ATP = dCMP + ADP + H(+). The enzyme catalyses 2'-deoxyuridine + ATP = dUMP + ADP + H(+). Phosphorylates thymidine, deoxycytidine, and deoxyuridine in the mitochondrial matrix. In non-replicating cells, where cytosolic dNTP synthesis is down-regulated, mtDNA synthesis depends solely on TK2 and DGUOK. In Macaca fascicularis (Crab-eating macaque), this protein is Thymidine kinase 2, mitochondrial (TK2).